A 126-amino-acid polypeptide reads, in one-letter code: Holo-[acyl-carrier-protein] synthase (126 aa).

Mg(2+)-binding residues include D9 and E58.

It belongs to the P-Pant transferase superfamily. AcpS family. The cofactor is Mg(2+).

It localises to the cytoplasm. The catalysed reaction is apo-[ACP] + CoA = holo-[ACP] + adenosine 3',5'-bisphosphate + H(+). Its function is as follows. Transfers the 4'-phosphopantetheine moiety from coenzyme A to a Ser of acyl-carrier-protein. The sequence is that of Holo-[acyl-carrier-protein] synthase from Salmonella choleraesuis (strain SC-B67).